A 515-amino-acid chain; its full sequence is 1-pyrroline-5-carboxylate dehydrogenase 2 (515 aa).

Residues Glu286 and Cys320 contribute to the active site.

Belongs to the aldehyde dehydrogenase family. RocA subfamily.

The catalysed reaction is L-glutamate 5-semialdehyde + NAD(+) + H2O = L-glutamate + NADH + 2 H(+). The protein operates within amino-acid degradation; L-proline degradation into L-glutamate; L-glutamate from L-proline: step 2/2. Important for the use of proline as a sole carbon and energy source or a sole nitrogen source. This chain is 1-pyrroline-5-carboxylate dehydrogenase 2, found in Bacillus subtilis (strain 168).